The following is a 407-amino-acid chain: Argininosuccinate synthase (407 aa).

Residues 16–24 (AYSGGLDTS) and Ala-44 contribute to the ATP site. L-citrulline-binding residues include Tyr-96 and Ser-101. An ATP-binding site is contributed by Gly-126. The L-aspartate site is built by Thr-128, Asn-132, and Asp-133. Asn-132 contributes to the L-citrulline binding site. Arg-136, Ser-185, Ser-194, Glu-270, and Tyr-282 together coordinate L-citrulline.

It belongs to the argininosuccinate synthase family. Type 1 subfamily. As to quaternary structure, homotetramer.

It localises to the cytoplasm. The catalysed reaction is L-citrulline + L-aspartate + ATP = 2-(N(omega)-L-arginino)succinate + AMP + diphosphate + H(+). Its pathway is amino-acid biosynthesis; L-arginine biosynthesis; L-arginine from L-ornithine and carbamoyl phosphate: step 2/3. The polypeptide is Argininosuccinate synthase (Shewanella amazonensis (strain ATCC BAA-1098 / SB2B)).